Here is a 206-residue protein sequence, read N- to C-terminus: Large ribosomal subunit protein mL40 (206 aa).

A mitochondrion-targeting transit peptide spans 1-46 (MTASVLRSISLALRPTSGLLGTWQTQLRETHQRASLLSFWELIPMR). The tract at residues 168–192 (LFPFEKEGPHYTPPIPNYQPPEGRY) is disordered.

This sequence belongs to the mitochondrion-specific ribosomal protein mL40 family. In terms of assembly, component of the mitochondrial large ribosomal subunit (mt-LSU). Mature mammalian 55S mitochondrial ribosomes consist of a small (28S) and a large (39S) subunit. The 28S small subunit contains a 12S ribosomal RNA (12S mt-rRNA) and 30 different proteins. The 39S large subunit contains a 16S rRNA (16S mt-rRNA), a copy of mitochondrial valine transfer RNA (mt-tRNA(Val)), which plays an integral structural role, and 52 different proteins. mL40 binds to the major groove of the anticodon stem of mt-tRNA(Val) in the central protuberance. As to expression, ubiquitous.

The protein localises to the mitochondrion. The sequence is that of Large ribosomal subunit protein mL40 (MRPL40) from Homo sapiens (Human).